Reading from the N-terminus, the 508-residue chain is ATP synthase subunit alpha, mitochondrial (508 aa).

171-178 (GDRQTGKT) is an ATP binding site.

The protein belongs to the ATPase alpha/beta chains family. F-type ATPases have 2 components, CF(1) - the catalytic core - and CF(0) - the membrane proton channel. CF(1) has five subunits: alpha(3), beta(3), gamma(1), delta(1), epsilon(1). CF(0) has three main subunits: a, b and c.

The protein localises to the mitochondrion. It is found in the mitochondrion inner membrane. Functionally, mitochondrial membrane ATP synthase (F(1)F(0) ATP synthase or Complex V) produces ATP from ADP in the presence of a proton gradient across the membrane which is generated by electron transport complexes of the respiratory chain. F-type ATPases consist of two structural domains, F(1) - containing the extramembraneous catalytic core, and F(0) - containing the membrane proton channel, linked together by a central stalk and a peripheral stalk. During catalysis, ATP synthesis in the catalytic domain of F(1) is coupled via a rotary mechanism of the central stalk subunits to proton translocation. Subunits alpha and beta form the catalytic core in F(1). Rotation of the central stalk against the surrounding alpha(3)beta(3) subunits leads to hydrolysis of ATP in three separate catalytic sites on the beta subunits. Subunit alpha does not bear the catalytic high-affinity ATP-binding sites. The chain is ATP synthase subunit alpha, mitochondrial (ATPA) from Phaseolus vulgaris (Kidney bean).